The following is a 263-amino-acid chain: Endonuclease 8 (263 aa).

The active-site Schiff-base intermediate with DNA is proline 2. Glutamate 3 acts as the Proton donor in catalysis. Lysine 53 acts as the Proton donor; for beta-elimination activity in catalysis. DNA is bound by residues glutamine 70, arginine 125, and asparagine 169. An FPG-type zinc finger spans residues 229–263 (KVFHRDGEPCERCGSIIEKTTLSSRPFYWCPGCQH). The Proton donor; for delta-elimination activity role is filled by arginine 253.

This sequence belongs to the FPG family. It depends on Zn(2+) as a cofactor.

The catalysed reaction is 2'-deoxyribonucleotide-(2'-deoxyribose 5'-phosphate)-2'-deoxyribonucleotide-DNA = a 3'-end 2'-deoxyribonucleotide-(2,3-dehydro-2,3-deoxyribose 5'-phosphate)-DNA + a 5'-end 5'-phospho-2'-deoxyribonucleoside-DNA + H(+). Functionally, involved in base excision repair of DNA damaged by oxidation or by mutagenic agents. Acts as a DNA glycosylase that recognizes and removes damaged bases. Has a preference for oxidized pyrimidines, such as thymine glycol, 5,6-dihydrouracil and 5,6-dihydrothymine. Has AP (apurinic/apyrimidinic) lyase activity and introduces nicks in the DNA strand. Cleaves the DNA backbone by beta-delta elimination to generate a single-strand break at the site of the removed base with both 3'- and 5'-phosphates. This chain is Endonuclease 8, found in Escherichia coli O17:K52:H18 (strain UMN026 / ExPEC).